We begin with the raw amino-acid sequence, 116 residues long: UPF0102 protein IL0423 (116 aa).

The protein belongs to the UPF0102 family.

The polypeptide is UPF0102 protein IL0423 (Idiomarina loihiensis (strain ATCC BAA-735 / DSM 15497 / L2-TR)).